An 83-amino-acid polypeptide reads, in one-letter code: RNA-binding protein Hfq (83 aa).

Residues 10-70 enclose the Sm domain; the sequence is DAFLNQLRKE…ISTVSPSRPV (61 aa).

Belongs to the Hfq family. As to quaternary structure, homohexamer.

Its function is as follows. RNA chaperone that binds small regulatory RNA (sRNAs) and mRNAs to facilitate mRNA translational regulation in response to envelope stress, environmental stress and changes in metabolite concentrations. Also binds with high specificity to tRNAs. The chain is RNA-binding protein Hfq from Desulforudis audaxviator (strain MP104C).